The chain runs to 476 residues: MSAKTGTSKTLYEKVYDAHVAVAAEGENPILYIDRHLVHEVTSPQAFDGLREKGRKVRQIGKTFATMDHNVSTQTKDINASGEMARIQMETLAKNCKEFGVTLYDLNHKYQGIVHVIGPELGITLPGMTIVCGDSHTATHGAFGSLAFGIGTSEVEHVLATQTLKQSLAKTMKIEVVGKVAEGITAKDIVLAIIGKTTAAGGTGYVVEFCGEAITDLTMEGRMTVCNMAIELGAKAGLIAPDQTTYDYIKDRKFSPTGANFDAAVEYWSTLKTDDGATFDAVVTLDAKNIKPQVTWGTNPGQVIAIDELIPGPDNFSEQVDKTSAEKALAYMGLEAGKKLSDFDIDKVFIGSCTNSRIEDMRAAAAIAKGRKVAANVQALVVPGSEQVKAQAEKEGLDKIFIEAGFEWRLPGCSMCLAMNNDRLGPKERCASTSNRNFEGRQGRDGRTHLVSPAMAAAAACAGHFVDIRDLDNATA.

[4Fe-4S] cluster contacts are provided by Cys-353, Cys-413, and Cys-416.

Belongs to the aconitase/IPM isomerase family. LeuC type 1 subfamily. Heterodimer of LeuC and LeuD. [4Fe-4S] cluster is required as a cofactor.

The catalysed reaction is (2R,3S)-3-isopropylmalate = (2S)-2-isopropylmalate. It functions in the pathway amino-acid biosynthesis; L-leucine biosynthesis; L-leucine from 3-methyl-2-oxobutanoate: step 2/4. Functionally, catalyzes the isomerization between 2-isopropylmalate and 3-isopropylmalate, via the formation of 2-isopropylmaleate. This is 3-isopropylmalate dehydratase large subunit from Photobacterium profundum (strain SS9).